The primary structure comprises 739 residues: TonB-dependent heme receptor A (739 aa).

The N-terminal stretch at 1–22 is a signal peptide; sequence MKMKKQCATLTFFIGLHGYTIA. The 113-residue stretch at 38–150 folds into the TBDR plug domain; the sequence is GHHERQPDRS…FAGTIKLETK (113 aa). Residues 161-739 enclose the TBDR beta-barrel domain; the sequence is LLGGLLKYGY…NIKLSISKQF (579 aa).

It belongs to the TonB-dependent receptor family.

It is found in the cell outer membrane. In terms of biological role, heme receptor. In Haemophilus ducreyi (strain 35000HP / ATCC 700724), this protein is TonB-dependent heme receptor A (tdhA).